A 692-amino-acid chain; its full sequence is UvrABC system protein B (692 aa).

Residues 32–187 form the Helicase ATP-binding domain; sequence ENIENGEKAQ…LLNDLVGIQF (156 aa). An ATP-binding site is contributed by 45-52; it reads GATGTGKT. The short motif at 98 to 121 is the Beta-hairpin element; the sequence is YYDYYQPEAYVPSSDTYIEKDSSV. A Helicase C-terminal domain is found at 436-631; sequence QIDDLVGEIH…TIKKEIRDLI (196 aa). The UVR domain occupies 656 to 691; it reads KALVKKLEKEMQQAAAALDFEGAAQLRDMVLELRAM.

Belongs to the UvrB family. Forms a heterotetramer with UvrA during the search for lesions. Interacts with UvrC in an incision complex.

It localises to the cytoplasm. The UvrABC repair system catalyzes the recognition and processing of DNA lesions. A damage recognition complex composed of 2 UvrA and 2 UvrB subunits scans DNA for abnormalities. Upon binding of the UvrA(2)B(2) complex to a putative damaged site, the DNA wraps around one UvrB monomer. DNA wrap is dependent on ATP binding by UvrB and probably causes local melting of the DNA helix, facilitating insertion of UvrB beta-hairpin between the DNA strands. Then UvrB probes one DNA strand for the presence of a lesion. If a lesion is found the UvrA subunits dissociate and the UvrB-DNA preincision complex is formed. This complex is subsequently bound by UvrC and the second UvrB is released. If no lesion is found, the DNA wraps around the other UvrB subunit that will check the other stand for damage. The sequence is that of UvrABC system protein B from Lactococcus lactis subsp. cremoris (strain MG1363).